A 108-amino-acid polypeptide reads, in one-letter code: Large ribosomal subunit protein uL24 (108 aa).

It belongs to the universal ribosomal protein uL24 family. In terms of assembly, part of the 50S ribosomal subunit.

One of two assembly initiator proteins, it binds directly to the 5'-end of the 23S rRNA, where it nucleates assembly of the 50S subunit. In terms of biological role, one of the proteins that surrounds the polypeptide exit tunnel on the outside of the subunit. The chain is Large ribosomal subunit protein uL24 from Mycoplasmopsis pulmonis (strain UAB CTIP) (Mycoplasma pulmonis).